The chain runs to 113 residues: MRLISLLLFVLLLAIQYPLWLGKGGWLRVWELNHQVQEQATRNQMLKLRNAKLEGEVKDLQDGTGAIEERARYELGMVKDGEVFVQFVAPAPKVSATPPLPPPPNSPAATGRH.

Residues 1–3 (MRL) lie on the Cytoplasmic side of the membrane. A helical membrane pass occupies residues 4-21 (ISLLLFVLLLAIQYPLWL). Topologically, residues 22-113 (GKGGWLRVWE…PNSPAATGRH (92 aa)) are periplasmic. A coiled-coil region spans residues 34 to 63 (HQVQEQATRNQMLKLRNAKLEGEVKDLQDG). Positions 93–113 (KVSATPPLPPPPNSPAATGRH) are disordered.

This sequence belongs to the FtsB family. In terms of assembly, part of a complex composed of FtsB, FtsL and FtsQ.

The protein localises to the cell inner membrane. Its function is as follows. Essential cell division protein. May link together the upstream cell division proteins, which are predominantly cytoplasmic, with the downstream cell division proteins, which are predominantly periplasmic. The chain is Cell division protein FtsB from Cupriavidus pinatubonensis (strain JMP 134 / LMG 1197) (Cupriavidus necator (strain JMP 134)).